A 380-amino-acid polypeptide reads, in one-letter code: Crotonobetainyl-CoA reductase (380 aa).

The protein belongs to the acyl-CoA dehydrogenase family. As to quaternary structure, homotetramer. The cofactor is FAD.

It is found in the cytoplasm. The enzyme catalyses 4-(trimethylamino)butanoyl-CoA + oxidized [electron-transfer flavoprotein] + H(+) = crotonobetainyl-CoA + reduced [electron-transfer flavoprotein]. The protein operates within amine and polyamine metabolism; carnitine metabolism. Its function is as follows. Catalyzes the reduction of crotonobetainyl-CoA to gamma-butyrobetainyl-CoA. The chain is Crotonobetainyl-CoA reductase from Proteus sp. (strain LE138).